Here is a 231-residue protein sequence, read N- to C-terminus: MSEIKDVIVQGLWKNNSALVQLLGLCPLLAVTSTATNALGLGLATTLVLTLTNLTISTLRHWTPAEIRIPIYVMIIASVVSAVQMLINAYAFGLYQSLGIFIPLIVTNCIVVGRAEAFAAKKGPALSALDGFSIGMGATCAMCVLGSLREIIGNGTLFDGADALLGSWAKVLRVEIFHTDSPFLLAMLPPGAFIGLGLMLAGKYLIDERMKKRRTEAAAERALPNGETGNV.

6 helical membrane passes run 18 to 38, 39 to 59, 63 to 83, 86 to 106, 125 to 145, and 182 to 202; these read ALVQLLGLCPLLAVTSTATNA, LGLGLATTLVLTLTNLTISTL, TPAEIRIPIYVMIIASVVSAV, LINAYAFGLYQSLGIFIPLIV, ALSALDGFSIGMGATCAMCVL, and PFLLAMLPPGAFIGLGLMLAG.

The protein belongs to the NqrDE/RnfAE family. In terms of assembly, the complex is composed of six subunits: RsxA, RsxB, RsxC, RsxD, RsxE and RsxG.

The protein localises to the cell inner membrane. Functionally, part of a membrane-bound complex that couples electron transfer with translocation of ions across the membrane. Required to maintain the reduced state of SoxR. This Escherichia coli (strain SMS-3-5 / SECEC) protein is Ion-translocating oxidoreductase complex subunit E.